The primary structure comprises 1053 residues: Zinc finger and BTB domain-containing protein 11 (1053 aa).

The span at 141-156 (LDLESGEESNESEDDL) shows a compositional bias: acidic residues. Positions 141-173 (LDLESGEESNESEDDLSNFTSSPTTASKPAKKK) are disordered. Low complexity predominate over residues 157–168 (SNFTSSPTTASK). Residues 214–282 (CDVTLLIEGE…AYTSVLSFDF (69 aa)) form the BTB domain. The interval 546–566 (LVQRGKKMKQPKRDAKENTEE) is disordered. A compositionally biased stretch (basic and acidic residues) spans 556 to 566 (PKRDAKENTEE). 2 C2H2-type zinc fingers span residues 569–591 (HKCGECGMVFQRRYALIMHKLKH) and 597–619 (YKCPLCKKQFQYSASLRAHLIRH). Residues 619–643 (HTRKDAPSSSSSNSTSNEASGTSSE) form a disordered region. A compositionally biased stretch (low complexity) spans 626 to 642 (SSSSSNSTSNEASGTSS). C2H2-type zinc fingers lie at residues 651 to 673 (FICSICGRTLPKLYSLRIHMLKH), 679 to 701 (HACQVCGKTFIYKHGLKLHQSLH), 707 to 729 (FQCELCVKSFVTKRSLQEHMSIH), 735 to 757 (YLCSVCGKSFHRGSGLSKHFKKH), 766 to 788 (YHCTQCEKSFFEARDLRQHMNKH), 794 to 816 (FQCQFCDKCYSWKKDWYSHVKSH), 822 to 846 (YRCNICGKEFYEKALFRRHVKKATH), 858 to 880 (RVCEKCGRKFTQLREYRRHMNNH), 886 to 908 (FECLTCGVAWADARSLKRHVRTH), and 914 to 937 (YVCPVCSEAYIDARTLRKHMTKFH). A Glycyl lysine isopeptide (Lys-Gly) (interchain with G-Cter in SUMO2) cross-link involves residue Lys-1043. Residue Ser-1050 is modified to Phosphoserine.

Its subcellular location is the nucleus. The protein resides in the nucleolus. In terms of biological role, may be involved in transcriptional regulation. This Homo sapiens (Human) protein is Zinc finger and BTB domain-containing protein 11.